A 383-amino-acid polypeptide reads, in one-letter code: NIPA-like protein 2 (383 aa).

Residues N23 and N33 are each glycosylated (N-linked (GlcNAc...) asparagine). 7 helical membrane passes run 46-66 (IHLFGVLLAILGNLVISISLN), 88-108 (VLWWGGVLLMAVGETGNFAAY), 110-130 (FAPITLIAPLGCVSVTGSAII), 144-164 (LLGTTLAFAGTYLLVNFAPNI), 177-197 (LVGWQFLIYVILEILIFCILL), 209-229 (VILLTLVAILASLTVISVKAV), and 243-263 (LTYPIFYIMFIIMIASCVFQV). N274 is a glycosylation site (N-linked (GlcNAc...) asparagine). The next 2 membrane-spanning stretches (helical) occupy residues 278–298 (VVPVNHIFFTISAIIAGIIFY) and 306–326 (FLTVFIYLFGCFLSFLGVFLV). Residues 355–383 (QPDSHSLSYGTLPDGSDSTKSQSGEKKEV) form a disordered region.

The protein belongs to the NIPA family.

The protein resides in the membrane. This chain is NIPA-like protein 2 (NIPAL2), found in Homo sapiens (Human).